We begin with the raw amino-acid sequence, 258 residues long: Thiazole synthase (258 aa).

The Schiff-base intermediate with DXP role is filled by K100. Residues G161, 187-188, and 209-210 each bind 1-deoxy-D-xylulose 5-phosphate; these read AG and NT.

This sequence belongs to the ThiG family. Homotetramer. Forms heterodimers with either ThiH or ThiS.

Its subcellular location is the cytoplasm. The enzyme catalyses [ThiS sulfur-carrier protein]-C-terminal-Gly-aminoethanethioate + 2-iminoacetate + 1-deoxy-D-xylulose 5-phosphate = [ThiS sulfur-carrier protein]-C-terminal Gly-Gly + 2-[(2R,5Z)-2-carboxy-4-methylthiazol-5(2H)-ylidene]ethyl phosphate + 2 H2O + H(+). The protein operates within cofactor biosynthesis; thiamine diphosphate biosynthesis. Its function is as follows. Catalyzes the rearrangement of 1-deoxy-D-xylulose 5-phosphate (DXP) to produce the thiazole phosphate moiety of thiamine. Sulfur is provided by the thiocarboxylate moiety of the carrier protein ThiS. In vitro, sulfur can be provided by H(2)S. This Campylobacter jejuni (strain RM1221) protein is Thiazole synthase.